A 173-amino-acid polypeptide reads, in one-letter code: Translation initiation factor IF-3 (173 aa).

The protein belongs to the IF-3 family. As to quaternary structure, monomer.

The protein resides in the cytoplasm. Its function is as follows. IF-3 binds to the 30S ribosomal subunit and shifts the equilibrium between 70S ribosomes and their 50S and 30S subunits in favor of the free subunits, thus enhancing the availability of 30S subunits on which protein synthesis initiation begins. This is Translation initiation factor IF-3 from Methylobacterium radiotolerans (strain ATCC 27329 / DSM 1819 / JCM 2831 / NBRC 15690 / NCIMB 10815 / 0-1).